The chain runs to 237 residues: Methylthioribulose-1-phosphate dehydratase (237 aa).

A substrate-binding site is contributed by C98. Zn(2+) contacts are provided by H116 and H118. The active-site Proton donor/acceptor is E140. H196 provides a ligand contact to Zn(2+).

Belongs to the aldolase class II family. MtnB subfamily. Zn(2+) serves as cofactor.

It localises to the cytoplasm. It carries out the reaction 5-(methylsulfanyl)-D-ribulose 1-phosphate = 5-methylsulfanyl-2,3-dioxopentyl phosphate + H2O. Its pathway is amino-acid biosynthesis; L-methionine biosynthesis via salvage pathway; L-methionine from S-methyl-5-thio-alpha-D-ribose 1-phosphate: step 2/6. Functionally, catalyzes the dehydration of methylthioribulose-1-phosphate (MTRu-1-P) into 2,3-diketo-5-methylthiopentyl-1-phosphate (DK-MTP-1-P). The protein is Methylthioribulose-1-phosphate dehydratase of Laccaria bicolor (strain S238N-H82 / ATCC MYA-4686) (Bicoloured deceiver).